The chain runs to 549 residues: Putative lipase ATG15 (549 aa).

Topologically, residues 1–19 are cytoplasmic; the sequence is MKQDLYKESSPPPSTTKSK. Residues 20–42 form a helical; Signal-anchor for type II membrane protein membrane-spanning segment; it reads GLYVIVAALVTTAIYLLYSQGYS. Residues 43-549 are Lumenal-facing; the sequence is NTHGEKDMPS…SHTVTHVTMA (507 aa). Asn204 and Asn315 each carry an N-linked (GlcNAc...) asparagine glycan. Catalysis depends on Ser331, which acts as the Charge relay system. An N-linked (GlcNAc...) asparagine glycan is attached at Asn448. Residues 474–510 are disordered; sequence DDDDKDKKKKKKTSTSSSVVSKTKTSTSSTVATNTMP. Positions 487 to 504 are enriched in low complexity; the sequence is STSSSVVSKTKTSTSSTV.

This sequence belongs to the AB hydrolase superfamily. Lipase family. In terms of assembly, binds to both phosphatidylinositol (PI) and phosphatidylinositol 3,5-bisphosphate (PIP2).

It is found in the endosome. The protein resides in the multivesicular body membrane. It localises to the prevacuolar compartment membrane. It carries out the reaction a triacylglycerol + H2O = a diacylglycerol + a fatty acid + H(+). In terms of biological role, lipase which is essential for lysis of subvacuolar cytoplasm to vacuole targeted bodies and intravacuolar autophagic bodies. Involved in the lysis of intravacuolar multivesicular body (MVB) vesicles. The intravacuolar membrane disintegration by ATG15 is critical to life span extension. The polypeptide is Putative lipase ATG15 (ATG15) (Yarrowia lipolytica (strain CLIB 122 / E 150) (Yeast)).